The primary structure comprises 290 residues: Translin-associated protein X (290 aa).

Residues 1-32 (MSNKEGSGGFRKRKHDNFPHNQRREGKDVNSS) form a disordered region. The span at 16–28 (DNFPHNQRREGKD) shows a compositional bias: basic and acidic residues. The tract at residues 73-208 (LLHRITSAPD…MRMCINSVGN (136 aa)) is interaction with C1D. 2 residues coordinate Mg(2+): glutamate 129 and glutamate 197. Lysine 279 is covalently cross-linked (Glycyl lysine isopeptide (Lys-Gly) (interchain with G-Cter in SUMO2)).

The protein belongs to the translin family. Ring-shaped heterooctamer of six TSN and two TSNAX subunits. Interacts with GOLGA3, TSNAXIP1, SUN1 and AKAP9. Interacts with the homodimeric form of C1D following gamma-radiation. Interacts with TSN and C1D in a mutually exclusive manner. Sumoylated with SUMO1.

Its subcellular location is the cytoplasm. The protein resides in the perinuclear region. It is found in the golgi apparatus. It localises to the nucleus. In terms of biological role, acts in combination with TSN as an endonuclease involved in the activation of the RNA-induced silencing complex (RISC). Possible role in spermatogenesis. The protein is Translin-associated protein X (TSNAX) of Pongo abelii (Sumatran orangutan).